A 130-amino-acid polypeptide reads, in one-letter code: Small ribosomal subunit protein uS9 (130 aa).

It belongs to the universal ribosomal protein uS9 family.

The polypeptide is Small ribosomal subunit protein uS9 (Halorhodospira halophila (strain DSM 244 / SL1) (Ectothiorhodospira halophila (strain DSM 244 / SL1))).